A 37-amino-acid polypeptide reads, in one-letter code: Large ribosomal subunit protein bL36 (37 aa).

The protein belongs to the bacterial ribosomal protein bL36 family.

In Desulfitobacterium hafniense (strain Y51), this protein is Large ribosomal subunit protein bL36.